A 189-amino-acid polypeptide reads, in one-letter code: Elongation factor P (189 aa).

The protein belongs to the elongation factor P family.

Its subcellular location is the cytoplasm. Its pathway is protein biosynthesis; polypeptide chain elongation. Its function is as follows. Involved in peptide bond synthesis. Stimulates efficient translation and peptide-bond synthesis on native or reconstituted 70S ribosomes in vitro. Probably functions indirectly by altering the affinity of the ribosome for aminoacyl-tRNA, thus increasing their reactivity as acceptors for peptidyl transferase. In Pseudomonas putida (strain ATCC 700007 / DSM 6899 / JCM 31910 / BCRC 17059 / LMG 24140 / F1), this protein is Elongation factor P.